The chain runs to 522 residues: O-fucosyltransferase 38 (522 aa).

Residues 26-46 (AISLYLIFVFAFTIWVLVFSS) traverse the membrane as a helical; Signal-anchor for type II membrane protein segment. Over residues 54–67 (DHTKHQQQHHRDLI) the composition is skewed to basic and acidic residues. Residues 54-73 (DHTKHQQQHHRDLIDSESFP) are disordered. Residue Asn-147 is glycosylated (N-linked (GlcNAc...) asparagine). Residue 284 to 286 (HLR) participates in substrate binding. An N-linked (GlcNAc...) asparagine glycan is attached at Asn-325. The tract at residues 475–496 (HKDRQGAPRRRKGPTQGIKGRA) is disordered.

This sequence belongs to the glycosyltransferase GT106 family.

Its subcellular location is the membrane. Its pathway is glycan metabolism. The sequence is that of O-fucosyltransferase 38 from Arabidopsis thaliana (Mouse-ear cress).